A 187-amino-acid chain; its full sequence is Oligoribonuclease (187 aa).

The 164-residue stretch at 7–170 (LCWLDMEMTG…DDILESIEEM (164 aa)) folds into the Exonuclease domain. Tyrosine 128 is a catalytic residue.

The protein belongs to the oligoribonuclease family.

The protein localises to the cytoplasm. In terms of biological role, 3'-to-5' exoribonuclease specific for small oligoribonucleotides. This Neisseria meningitidis serogroup C / serotype 2a (strain ATCC 700532 / DSM 15464 / FAM18) protein is Oligoribonuclease.